We begin with the raw amino-acid sequence, 207 residues long: Uracil phosphoribosyltransferase (207 aa).

Residues arginine 77, arginine 102, and 129 to 137 (DPMLATGGS) each bind 5-phospho-alpha-D-ribose 1-diphosphate. Uracil-binding positions include isoleucine 192 and 197–199 (GDA). A 5-phospho-alpha-D-ribose 1-diphosphate-binding site is contributed by aspartate 198.

The protein belongs to the UPRTase family. It depends on Mg(2+) as a cofactor.

The enzyme catalyses UMP + diphosphate = 5-phospho-alpha-D-ribose 1-diphosphate + uracil. It participates in pyrimidine metabolism; UMP biosynthesis via salvage pathway; UMP from uracil: step 1/1. Allosterically activated by GTP. In terms of biological role, catalyzes the conversion of uracil and 5-phospho-alpha-D-ribose 1-diphosphate (PRPP) to UMP and diphosphate. This is Uracil phosphoribosyltransferase from Mycoplasma mobile (strain ATCC 43663 / 163K / NCTC 11711) (Mesomycoplasma mobile).